Here is a 644-residue protein sequence, read N- to C-terminus: uncharacterized protein (644 aa).

Residues 16–38 form a helical membrane-spanning segment; the sequence is LLSYLGVVGVGIAGLCIYRSVWG. Basic and acidic residues predominate over residues 586–603; that stretch reads VRQLQKEAGEGEAEEHPR. The segment at 586 to 613 is disordered; it reads VRQLQKEAGEGEAEEHPRARPAAGKAQR.

The protein localises to the membrane. This is an uncharacterized protein from Treponema pallidum (strain Nichols).